We begin with the raw amino-acid sequence, 244 residues long: Mannose-binding protein C (244 aa).

An N-terminal signal peptide occupies residues 1–18; the sequence is MSLFTSFLLLCVLTAVYA. The Collagen-like domain occupies 38 to 96; the sequence is GLNGFPGKDGHDGAKGEKGEPGQGLRGLQGPPGKVGPAGPPGNPGSKGATGPKGDRGES. P43 is modified (4-hydroxyproline). Positions 43-99 are disordered; sequence PGKDGHDGAKGEKGEPGQGLRGLQGPPGKVGPAGPPGNPGSKGATGPKGDRGESVEF. The span at 45–57 shows a compositional bias: basic and acidic residues; it reads KDGHDGAKGEKGE. 4-hydroxyproline is present on residues P58, P69, P78, and P81. A compositionally biased stretch (low complexity) spans 65-74; it reads LQGPPGKVGP. Residues 108–126 adopt a coiled-coil conformation; the sequence is IAALRSELRAMRKWVLLSM. The C-type lectin domain maps to 129 to 241; the sequence is NVGKKYFMSS…CSDSFLVVCE (113 aa). 2 cysteine pairs are disulfide-bonded: C151/C240 and C218/C232.

Oligomeric complex of 3 or more homotrimers. Interacts with MASP1 and MASP2. Interacts with MEP1A and MEP1B and may inhibit their catalytic activity.

It is found in the secreted. Its function is as follows. Calcium-dependent lectin involved in innate immune defense. Binds mannose, fucose and N-acetylglucosamine on different microorganisms and activates the lectin complement pathway. Binds to late apoptotic cells, as well as to apoptotic blebs and to necrotic cells, but not to early apoptotic cells, facilitating their uptake by macrophages. This chain is Mannose-binding protein C (Mbl2), found in Rattus norvegicus (Rat).